The chain runs to 208 residues: ATP-dependent Clp protease proteolytic subunit 1 (208 aa).

Ser-108 (nucleophile) is an active-site residue. The active site involves His-133.

This sequence belongs to the peptidase S14 family. Fourteen ClpP subunits assemble into 2 heptameric rings which stack back to back to give a disk-like structure with a central cavity, resembling the structure of eukaryotic proteasomes.

It is found in the cytoplasm. It catalyses the reaction Hydrolysis of proteins to small peptides in the presence of ATP and magnesium. alpha-casein is the usual test substrate. In the absence of ATP, only oligopeptides shorter than five residues are hydrolyzed (such as succinyl-Leu-Tyr-|-NHMec, and Leu-Tyr-Leu-|-Tyr-Trp, in which cleavage of the -Tyr-|-Leu- and -Tyr-|-Trp bonds also occurs).. Functionally, cleaves peptides in various proteins in a process that requires ATP hydrolysis. Has a chymotrypsin-like activity. Plays a major role in the degradation of misfolded proteins. This chain is ATP-dependent Clp protease proteolytic subunit 1, found in Corynebacterium efficiens (strain DSM 44549 / YS-314 / AJ 12310 / JCM 11189 / NBRC 100395).